Reading from the N-terminus, the 435-residue chain is Glutamyl-tRNA reductase (435 aa).

Residues threonine 49–arginine 52, serine 109, glutamate 114–glutamine 116, and glutamine 120 each bind substrate. The active-site Nucleophile is cysteine 50. Glycine 189–serine 194 is a binding site for NADP(+).

This sequence belongs to the glutamyl-tRNA reductase family. Homodimer.

The catalysed reaction is (S)-4-amino-5-oxopentanoate + tRNA(Glu) + NADP(+) = L-glutamyl-tRNA(Glu) + NADPH + H(+). It functions in the pathway porphyrin-containing compound metabolism; protoporphyrin-IX biosynthesis; 5-aminolevulinate from L-glutamyl-tRNA(Glu): step 1/2. Functionally, catalyzes the NADPH-dependent reduction of glutamyl-tRNA(Glu) to glutamate 1-semialdehyde (GSA). The protein is Glutamyl-tRNA reductase of Listeria innocua serovar 6a (strain ATCC BAA-680 / CLIP 11262).